Consider the following 354-residue polypeptide: GDSL esterase/lipase At3g09930 (354 aa).

An N-terminal signal peptide occupies residues 1 to 24 (MELPKLLISLFLFSFSSFFLGAES). Serine 46 (nucleophile) is an active-site residue. N-linked (GlcNAc...) asparagine glycosylation is found at asparagine 133, asparagine 233, asparagine 237, asparagine 256, and asparagine 300. Catalysis depends on residues aspartate 329 and histidine 332.

Belongs to the 'GDSL' lipolytic enzyme family.

It is found in the secreted. This Arabidopsis thaliana (Mouse-ear cress) protein is GDSL esterase/lipase At3g09930.